Consider the following 137-residue polypeptide: Small ribosomal subunit protein uS12 (137 aa).

The segment at 1-25 (MPTINQLVRQGRKSKTYKSDSPALS) is disordered. Asp-102 carries the 3-methylthioaspartic acid modification.

This sequence belongs to the universal ribosomal protein uS12 family. As to quaternary structure, part of the 30S ribosomal subunit. Contacts proteins S8 and S17. May interact with IF1 in the 30S initiation complex.

In terms of biological role, with S4 and S5 plays an important role in translational accuracy. Interacts with and stabilizes bases of the 16S rRNA that are involved in tRNA selection in the A site and with the mRNA backbone. Located at the interface of the 30S and 50S subunits, it traverses the body of the 30S subunit contacting proteins on the other side and probably holding the rRNA structure together. The combined cluster of proteins S8, S12 and S17 appears to hold together the shoulder and platform of the 30S subunit. The polypeptide is Small ribosomal subunit protein uS12 (Finegoldia magna (strain ATCC 29328 / DSM 20472 / WAL 2508) (Peptostreptococcus magnus)).